Consider the following 781-residue polypeptide: Lon protease (781 aa).

Positions Ala-16 to Arg-214 constitute a Lon N-terminal domain. Gly-365–Thr-372 contacts ATP. The 181-residue stretch at Glu-601–Lys-781 folds into the Lon proteolytic domain. Active-site residues include Ser-688 and Lys-731.

Belongs to the peptidase S16 family. As to quaternary structure, homohexamer. Organized in a ring with a central cavity.

It localises to the cytoplasm. It carries out the reaction Hydrolysis of proteins in presence of ATP.. Functionally, ATP-dependent serine protease that mediates the selective degradation of mutant and abnormal proteins as well as certain short-lived regulatory proteins. Required for cellular homeostasis and for survival from DNA damage and developmental changes induced by stress. Degrades polypeptides processively to yield small peptide fragments that are 5 to 10 amino acids long. Binds to DNA in a double-stranded, site-specific manner. In Malacoplasma penetrans (strain HF-2) (Mycoplasma penetrans), this protein is Lon protease.